Here is a 309-residue protein sequence, read N- to C-terminus: Probable cell division protein WhiA (309 aa).

Residues 275 to 309 (SLKELGELVPGGPISKSGINHRLRKINQYAEKLRA) constitute a DNA-binding region (H-T-H motif).

Belongs to the WhiA family.

In terms of biological role, involved in cell division and chromosome segregation. In Pediococcus pentosaceus (strain ATCC 25745 / CCUG 21536 / LMG 10740 / 183-1w), this protein is Probable cell division protein WhiA.